Consider the following 51-residue polypeptide: Large ribosomal subunit protein eL39 (51 aa).

It belongs to the eukaryotic ribosomal protein eL39 family. As to quaternary structure, part of the 50S ribosomal subunit.

The chain is Large ribosomal subunit protein eL39 from Thermococcus kodakarensis (strain ATCC BAA-918 / JCM 12380 / KOD1) (Pyrococcus kodakaraensis (strain KOD1)).